Reading from the N-terminus, the 572-residue chain is NADH-ubiquinone oxidoreductase chain 5 (572 aa).

17 helical membrane-spanning segments follow: residues Phe-6 to Ile-26, Val-44 to Ile-64, Ile-86 to Ile-106, Ser-107 to Gln-127, Val-147 to Tyr-167, Ile-179 to Leu-201, Pro-208 to Arg-230, Met-234 to Met-254, Ile-268 to Tyr-288, Leu-291 to Gly-311, Ser-337 to Tyr-357, Asn-372 to Phe-394, Ile-422 to Val-442, Phe-454 to Val-474, Leu-479 to Phe-499, Trp-524 to Ile-544, and Phe-552 to Leu-572.

The protein belongs to the complex I subunit 5 family.

It is found in the mitochondrion inner membrane. The catalysed reaction is a ubiquinone + NADH + 5 H(+)(in) = a ubiquinol + NAD(+) + 4 H(+)(out). Functionally, core subunit of the mitochondrial membrane respiratory chain NADH dehydrogenase (Complex I) that is believed to belong to the minimal assembly required for catalysis. Complex I functions in the transfer of electrons from NADH to the respiratory chain. The immediate electron acceptor for the enzyme is believed to be ubiquinone. This Locusta migratoria (Migratory locust) protein is NADH-ubiquinone oxidoreductase chain 5 (ND5).